Here is a 515-residue protein sequence, read N- to C-terminus: 13S globulin seed storage protein (515 aa).

The signal sequence occupies residues 1–22; it reads MSTKLILSFSLCLMVLSCSAQA. The segment at 23 to 96 is igE-binding epitope; the sequence is AQLWPWRKGQ…RYVIQPGGLL (74 aa). Disulfide bonds link C47–C80 and C123–C327. The region spanning 52-272 is the Cupin type-1 1 domain; the sequence is LTASEPSRRV…FRDVDRETIS (221 aa). Positions 97–172 are igE-binding epitope with a very strong IgE-binding activity; sequence LPSYSNAPYI…REGDVIPSPA (76 aa). 3 disordered regions span residues 123–156, 210–241, and 295–320; these read CPETFQSDSEYPQSQRGQHSRESESQESSRGDQH, LAGQSQQGREERRSQQQTREEGGDRQSRESDD, and PEDSEEGYERQRGDRKRDERGSGRSN. Basic and acidic residues-rich tracts occupy residues 141–156, 217–239, and 295–316; these read HSRESESQESSRGDQH, GREERRSQQQTREEGGDRQSRES, and PEDSEEGYERQRGDRKRDERGS. 2 igE-binding epitope regions span residues 173–248 and 249–320; these read GVVQ…LIGA and NILS…GRSN. The Cupin type-1 2 domain occupies 333–482; the sequence is QNVNRPSHAD…SYDISTEEAY (150 aa). Positions 347 to 387 are igE-binding epitope with a strong IgE-binding activity; it reads RAGRINTVNSNNLPILEFLQLSAQHVVLYKNAIIGPRWNLN. IgE-binding epitope stretches follow at residues 407–457, 440–476, and 475–511; these read EGKS…PIAG, EWVELKNNDNAITSPIAGRTSVLRAIPVEVLANSYDI, and DISTEEAYKLKNGRQEVEVFRPFQSRYEKEEEKERER.

It belongs to the 11S seed storage protein (globulins) family. As to quaternary structure, homohexamer. In terms of processing, proteolytically processed from a single precursor to produce an acidic and a basic chain that are linked by a disulfide bond. As to expression, expressed in seeds (at protein level).

Seed storage protein. In Fagopyrum tataricum (Tartarian buckwheat), this protein is 13S globulin seed storage protein.